The following is an 87-amino-acid chain: Guanine nucleotide-binding protein subunit gamma (87 aa).

Cys-84 carries the post-translational modification Cysteine methyl ester. The S-geranylgeranyl cysteine moiety is linked to residue Cys-84. A propeptide spans 85–87 (removed in mature form); the sequence is LLV.

This sequence belongs to the G protein gamma family. G proteins are composed of 3 units, alpha, beta and gamma. In terms of processing, the N-terminus is blocked.

It is found in the cell membrane. Guanine nucleotide-binding proteins (G proteins) are involved as a modulator or transducer in various transmembrane signaling systems. This major G-protein of the squid photoreceptor is involved in visual transduction. The beta and gamma chains are required for the GTPase activity, for replacement of GDP by GTP, and for G protein-effector interaction. The protein is Guanine nucleotide-binding protein subunit gamma of Loligo forbesii (Veined squid).